The chain runs to 472 residues: Homeobox protein PKNOX2 (472 aa).

A disordered region spans residues 1–62 (MMQHASPAPA…STPVPSAPID (62 aa)). The segment covering 26 to 38 (DSPQMTATAQPPS) has biased composition (polar residues). Residues 46 to 56 (SAPSAAASTPV) show a composition bias toward low complexity. Positions 96–179 (GSECITSASF…MHSDNLLRND (84 aa)) constitute an MEIS N-terminal domain. A DNA-binding region (homeobox) is located at residues 291–350 (KRGVLPKHATNIMRSWLFQHLMHPYPTEDEKRQIAAQTNLTLLQVNNWFINARRRILQPM). Disordered regions lie at residues 351–371 (LDASNPDPAPKAKKIKSQHRP), 386–405 (QQQGGAPGTNPDGSINLDNL), and 422–472 (MAAH…DSLE). A compositionally biased stretch (basic residues) spans 361–371 (KAKKIKSQHRP). Residues 429–454 (LDGTEEEDEDEMEEEEEEELEEEVDE) are compositionally biased toward acidic residues.

The protein belongs to the TALE/MEIS homeobox family.

The protein localises to the nucleus. The chain is Homeobox protein PKNOX2 (PKNOX2) from Homo sapiens (Human).